A 137-amino-acid polypeptide reads, in one-letter code: Small ribosomal subunit protein eS19 (137 aa).

Belongs to the eukaryotic ribosomal protein eS19 family. In terms of assembly, component of the small ribosomal subunit.

The protein resides in the cytoplasm. This chain is Small ribosomal subunit protein eS19 (RPS19), found in Encephalitozoon cuniculi (strain GB-M1) (Microsporidian parasite).